A 429-amino-acid chain; its full sequence is Adenylosuccinate synthetase (429 aa).

GTP-binding positions include 12-18 (GDEGKGK) and 40-42 (GHT). The active-site Proton acceptor is the D13. 2 residues coordinate Mg(2+): D13 and G40. Residues 13–16 (DEGK), 38–41 (NAGH), T128, R142, Q223, T238, and R302 each bind IMP. The active-site Proton donor is H41. Residue 298-304 (VNTGRPR) coordinates substrate. GTP-binding positions include R304, 330–332 (KLD), and 412–414 (GVG).

It belongs to the adenylosuccinate synthetase family. Homodimer. Mg(2+) is required as a cofactor.

It localises to the cytoplasm. The enzyme catalyses IMP + L-aspartate + GTP = N(6)-(1,2-dicarboxyethyl)-AMP + GDP + phosphate + 2 H(+). It participates in purine metabolism; AMP biosynthesis via de novo pathway; AMP from IMP: step 1/2. Its function is as follows. Plays an important role in the de novo pathway of purine nucleotide biosynthesis. Catalyzes the first committed step in the biosynthesis of AMP from IMP. In Paenarthrobacter aurescens (strain TC1), this protein is Adenylosuccinate synthetase.